The following is a 390-amino-acid chain: MRYLTAGESHGPQLTTIIEGVPAGLYITKEDIDYELQRRQKGHGRGRRMQIEKDQARITSGVRHGRSLGSPIALVVENNDWKHWTKIMGSEPITAEEESEMKRQISRPRPGHADLNGAIKYGHRDMRNVLERSSARETTVRVAAGAVAKKILSQLGIQVAGHVLEIGGVKAEKTNYESIENLKKVTEESPVRCYDEEAGRKMMDAIDEAKANGDSIGGIVEVIVEGVPVGVGSYVHYDRKLDSKLAAAVLSINAFKGVEFGIGFEAARKNGSEVHDEIIWDEEKGYTRATNRLGGLEGGMTTGMPIVVRGVMKPIPTLYKPLKSVDIETKEPFTASIERSDSCAVPAASVVAEAVVAWEIANAIVEQFGVDQMDRIAENVEKMRKLAREF.

NADP(+)-binding residues include R39 and R45. FMN contacts are provided by residues 132–134 (RSS), 253–254 (NA), G298, 313–317 (KPIPT), and R339.

The protein belongs to the chorismate synthase family. Homotetramer. FMNH2 is required as a cofactor.

The catalysed reaction is 5-O-(1-carboxyvinyl)-3-phosphoshikimate = chorismate + phosphate. Its pathway is metabolic intermediate biosynthesis; chorismate biosynthesis; chorismate from D-erythrose 4-phosphate and phosphoenolpyruvate: step 7/7. Its function is as follows. Catalyzes the anti-1,4-elimination of the C-3 phosphate and the C-6 proR hydrogen from 5-enolpyruvylshikimate-3-phosphate (EPSP) to yield chorismate, which is the branch point compound that serves as the starting substrate for the three terminal pathways of aromatic amino acid biosynthesis. This reaction introduces a second double bond into the aromatic ring system. This Bacillus licheniformis (strain ATCC 14580 / DSM 13 / JCM 2505 / CCUG 7422 / NBRC 12200 / NCIMB 9375 / NCTC 10341 / NRRL NRS-1264 / Gibson 46) protein is Chorismate synthase.